The sequence spans 749 residues: Adenosylcobalamin-dependent ribonucleoside-triphosphate reductase (749 aa).

The cysteines at positions 124 and 427 are disulfide-linked. Positions 152-163 are effector region-1; the sequence is SMPFSFMFDQLM. Residues 173–321 are effector region-2; the sequence is TPNNVHQMPV…MGNMIGKTVV (149 aa). Active-site residues include C416 and E418. The adenosylcobalamin-binding-1 stretch occupies residues 573-634; the sequence is FHYARYLIQR…EPAFASAGEV (62 aa). Residues 693–734 form an adenosylcobalamin-binding-2 region; it reads FKQAPKEPIDAATYDAKCQEITADVAEKFAAMTGNHDQKDIE.

The protein belongs to the class II ribonucleoside-triphosphate reductase family. In terms of assembly, monomer. Adenosylcob(III)alamin is required as a cofactor.

The enzyme catalyses a 2'-deoxyribonucleoside 5'-triphosphate + [thioredoxin]-disulfide + H2O = a ribonucleoside 5'-triphosphate + [thioredoxin]-dithiol. Its activity is regulated as follows. Allosterically regulated by ATP and dNTP. This Levilactobacillus brevis (strain ATCC 367 / BCRC 12310 / CIP 105137 / JCM 1170 / LMG 11437 / NCIMB 947 / NCTC 947) (Lactobacillus brevis) protein is Adenosylcobalamin-dependent ribonucleoside-triphosphate reductase (rtpR).